A 221-amino-acid chain; its full sequence is Large ribosomal subunit protein uL4 (221 aa).

Residues 44 to 102 (AARQGTHKVKRRGEVRGGGKKPYRQKGTGRARQGSTRAPQFAGGGVVHGPTPRDYSQRT) form a disordered region. Residues 61–72 (GGKKPYRQKGTG) are compositionally biased toward basic residues.

Belongs to the universal ribosomal protein uL4 family. As to quaternary structure, part of the 50S ribosomal subunit.

One of the primary rRNA binding proteins, this protein initially binds near the 5'-end of the 23S rRNA. It is important during the early stages of 50S assembly. It makes multiple contacts with different domains of the 23S rRNA in the assembled 50S subunit and ribosome. In terms of biological role, forms part of the polypeptide exit tunnel. This is Large ribosomal subunit protein uL4 from Streptomyces avermitilis (strain ATCC 31267 / DSM 46492 / JCM 5070 / NBRC 14893 / NCIMB 12804 / NRRL 8165 / MA-4680).